We begin with the raw amino-acid sequence, 191 residues long: Adenylate kinase (191 aa).

10 to 15 (AAGKGT) contributes to the ATP binding site. The tract at residues 30 to 59 (STGDMLRAAIASGSELGQRVKGVLDRGELV) is NMP. AMP contacts are provided by residues threonine 31, arginine 36, 57-59 (ELV), 85-88 (GFPR), and glutamine 92. The interval 126 to 136 (KRFEEQGRPDD) is LID. An ATP-binding site is contributed by arginine 127. Positions 133 and 144 each coordinate AMP. Residue glycine 172 participates in ATP binding.

This sequence belongs to the adenylate kinase family. Monomer.

It is found in the cytoplasm. It catalyses the reaction AMP + ATP = 2 ADP. It functions in the pathway purine metabolism; AMP biosynthesis via salvage pathway; AMP from ADP: step 1/1. Its function is as follows. Catalyzes the reversible transfer of the terminal phosphate group between ATP and AMP. Plays an important role in cellular energy homeostasis and in adenine nucleotide metabolism. In Caulobacter vibrioides (strain ATCC 19089 / CIP 103742 / CB 15) (Caulobacter crescentus), this protein is Adenylate kinase.